The chain runs to 119 residues: MAGLMTIVTSLLFLGVCAHHIIPTGSVVIPSPCCMFFVSKRIPENRVVSYQLSSRSTCLKAGVIFTTKKGQQFCGDPKQEWVQRYMKNLDAKQKKASPRARAVAVKGPVQRYPGNQTTC.

A signal peptide spans 1–26; sequence MAGLMTIVTSLLFLGVCAHHIIPTGS. Disulfide bonds link C33-C58 and C34-C74. An N-linked (GlcNAc...) asparagine glycan is attached at N115.

Belongs to the intercrine beta (chemokine CC) family. N-glycosylated. In terms of tissue distribution, activated monocytes and activated T lymphocytes.

The protein resides in the secreted. Chemotactic for resting T-lymphocytes, and eosinophils. Has lower chemotactic activity for neutrophils but none for monocytes and activated lymphocytes. Is a strong suppressor of colony formation by a multipotential hematopoietic progenitor cell line. Binds to CCR3. In Homo sapiens (Human), this protein is C-C motif chemokine 24.